A 352-amino-acid polypeptide reads, in one-letter code: uncharacterized protein (352 aa).

This is an uncharacterized protein from Thermoproteus tenax (TTV1).